A 445-amino-acid polypeptide reads, in one-letter code: Histidinol dehydrogenase (445 aa).

Positions 134, 198, and 226 each coordinate NAD(+). T249, Q271, and H274 together coordinate substrate. Positions 271 and 274 each coordinate Zn(2+). Catalysis depends on proton acceptor residues E340 and H341. Positions 341, 374, 428, and 433 each coordinate substrate. D374 lines the Zn(2+) pocket. H433 is a Zn(2+) binding site.

It belongs to the histidinol dehydrogenase family. Requires Zn(2+) as cofactor.

It catalyses the reaction L-histidinol + 2 NAD(+) + H2O = L-histidine + 2 NADH + 3 H(+). It functions in the pathway amino-acid biosynthesis; L-histidine biosynthesis; L-histidine from 5-phospho-alpha-D-ribose 1-diphosphate: step 9/9. Functionally, catalyzes the sequential NAD-dependent oxidations of L-histidinol to L-histidinaldehyde and then to L-histidine. This chain is Histidinol dehydrogenase, found in Nocardia farcinica (strain IFM 10152).